The chain runs to 335 residues: Phosphate acyltransferase (335 aa).

Belongs to the PlsX family. Homodimer. Probably interacts with PlsY.

Its subcellular location is the cytoplasm. It carries out the reaction a fatty acyl-[ACP] + phosphate = an acyl phosphate + holo-[ACP]. Its pathway is lipid metabolism; phospholipid metabolism. Its function is as follows. Catalyzes the reversible formation of acyl-phosphate (acyl-PO(4)) from acyl-[acyl-carrier-protein] (acyl-ACP). This enzyme utilizes acyl-ACP as fatty acyl donor, but not acyl-CoA. The chain is Phosphate acyltransferase from Streptococcus pyogenes serotype M6 (strain ATCC BAA-946 / MGAS10394).